The chain runs to 271 residues: 3-methyl-2-oxobutanoate hydroxymethyltransferase (271 aa).

Mg(2+) contacts are provided by D52 and D91. Residues 52–53, D91, and K121 contribute to the 3-methyl-2-oxobutanoate site; that span reads DS. Mg(2+) is bound at residue E123. The Proton acceptor role is filled by E189.

It belongs to the PanB family. In terms of assembly, homodecamer; pentamer of dimers. It depends on Mg(2+) as a cofactor.

It is found in the cytoplasm. It carries out the reaction 3-methyl-2-oxobutanoate + (6R)-5,10-methylene-5,6,7,8-tetrahydrofolate + H2O = 2-dehydropantoate + (6S)-5,6,7,8-tetrahydrofolate. Its pathway is cofactor biosynthesis; (R)-pantothenate biosynthesis; (R)-pantoate from 3-methyl-2-oxobutanoate: step 1/2. In terms of biological role, catalyzes the reversible reaction in which hydroxymethyl group from 5,10-methylenetetrahydrofolate is transferred onto alpha-ketoisovalerate to form ketopantoate. The protein is 3-methyl-2-oxobutanoate hydroxymethyltransferase of Acidothermus cellulolyticus (strain ATCC 43068 / DSM 8971 / 11B).